The chain runs to 334 residues: Ornithine carbamoyltransferase (334 aa).

Residues 57–60, Gln-84, Arg-108, and 135–138 each bind carbamoyl phosphate; these read STRT and HPTQ. L-ornithine-binding positions include Asn-169, Asp-233, and 237–238; that span reads SM. Carbamoyl phosphate-binding positions include 275-276 and Arg-320; that span reads CL.

This sequence belongs to the aspartate/ornithine carbamoyltransferase superfamily. OTCase family.

The protein localises to the cytoplasm. The catalysed reaction is carbamoyl phosphate + L-ornithine = L-citrulline + phosphate + H(+). It functions in the pathway amino-acid biosynthesis; L-arginine biosynthesis; L-arginine from L-ornithine and carbamoyl phosphate: step 1/3. Functionally, reversibly catalyzes the transfer of the carbamoyl group from carbamoyl phosphate (CP) to the N(epsilon) atom of ornithine (ORN) to produce L-citrulline. This is Ornithine carbamoyltransferase from Aliivibrio fischeri (strain ATCC 700601 / ES114) (Vibrio fischeri).